The following is a 383-amino-acid chain: Neuropeptide Y receptor type 1 (383 aa).

Over 1 to 34 (MNSTSFSQLENHSVHYNLSEEKPSFFAFENDDCH) the chain is Extracellular. 3 N-linked (GlcNAc...) asparagine glycosylation sites follow: Asn-2, Asn-11, and Asn-17. The helical transmembrane segment at 35 to 55 (LPLAVIFTLALAYGAVIILGV) threads the bilayer. Over 56–87 (SGNLALILIILKQKEMRNVTNILIVNLSFSDL) the chain is Cytoplasmic. A helical transmembrane segment spans residues 88–108 (LVAIMCLPFTFVYTLMDHWIF). The Extracellular portion of the chain corresponds to 109 to 116 (GEIMCKLN). Residues Cys-113 and Cys-198 are joined by a disulfide bond. A helical transmembrane segment spans residues 117–137 (PFVQCVSITVSIFSLVLIAVE). Residues 138-154 (RHQLIINPRGWRPNNRH) are Cytoplasmic-facing. The helical transmembrane segment at 155–175 (AYIGIAVIWVLAVASSLPFMI) threads the bilayer. Residues 176–211 (YQVLTDEPFQNVTLDAFKDKLVCFDQFPSDSHRLSY) are Extracellular-facing. The helical transmembrane segment at 212 to 232 (TTLLLVLQYFGPLCFIFICYF) threads the bilayer. Residues 233 to 260 (KIYIRLKRRNNMMDKMRDSKYRSSESKR) lie on the Cytoplasmic side of the membrane. A helical transmembrane segment spans residues 261–281 (INIMLLSIVVAFAVCWLPLTI). Residues 282–299 (FNTVFDWNHQIIATCNHN) lie on the Extracellular side of the membrane. Residues 300-320 (LLFLLCHLTAMISTCVNPIFY) traverse the membrane as a helical segment. Residues 321 to 383 (GFLNKNFQRD…KISCVENEKI (63 aa)) are Cytoplasmic-facing. Cys-338 carries the S-palmitoyl cysteine lipid modification. 2 positions are modified to phosphoserine: Ser-368 and Ser-376.

Belongs to the G-protein coupled receptor 1 family.

It localises to the cell membrane. Functionally, receptor for neuropeptide Y and peptide YY. The polypeptide is Neuropeptide Y receptor type 1 (NPY1R) (Cavia porcellus (Guinea pig)).